A 249-amino-acid polypeptide reads, in one-letter code: MTTPHTLLRSLPSDLDPNRLPRHVAAIMDGNGRWASKRNLPRVMGHQAGVSALKELLRCCKDWGIGALTVYAFSTENWKRPQYEVEFLMALFEKVLNHELSEMVDEGVRIRFVGALAHLPGALQSAIEGAMAATEANTAVEFTVATNYGGRQEIVNACRELAEQVRSGRLLPEQIDEKLFAQHLYTRELSDPDLLIRTSGEQRLSNYLLWQMAYTEIYVADVLWPDFDRAAFHAALQSYQGRQRRFGKV.

Asp-29 is a catalytic residue. A Mg(2+)-binding site is contributed by Asp-29. Residues 30–33 (GNGR), Trp-34, Arg-42, His-46, and 74–76 (STE) contribute to the substrate site. The Proton acceptor role is filled by Asn-77. Residues Trp-78, Arg-80, Arg-197, and 203-205 (RLS) contribute to the substrate site. Glu-216 lines the Mg(2+) pocket.

It belongs to the UPP synthase family. In terms of assembly, homodimer. The cofactor is Mg(2+).

In terms of biological role, catalyzes the condensation of isopentenyl diphosphate (IPP) with allylic pyrophosphates generating different type of terpenoids. The protein is Isoprenyl transferase of Gloeobacter violaceus (strain ATCC 29082 / PCC 7421).